A 932-amino-acid chain; its full sequence is Protocadherin gamma-A6 (932 aa).

The N-terminal stretch at Met1–Ala29 is a signal peptide. Cadherin domains are found at residues Gln30 to Phe133, Leu134 to Phe242, Thr243 to Val347, Val348 to Phe452, Pro453 to Ile562, and Asp570 to Ala682. Residues Gln30 to Tyr692 lie on the Extracellular side of the membrane. An N-linked (GlcNAc...) asparagine glycan is attached at Asn81. 2 N-linked (GlcNAc...) asparagine glycosylation sites follow: Asn419 and Asn545. Asn685 carries N-linked (GlcNAc...) asparagine glycosylation. A helical membrane pass occupies residues Leu693–Ala713. Topologically, residues Leu714–Lys932 are cytoplasmic. Disordered regions lie at residues Asp803–Asn841 and Ala902–Lys932. Polar residues predominate over residues Gln806–Asn841. The segment covering Asn922–Lys932 has biased composition (basic residues).

It is found in the cell membrane. Its function is as follows. Potential calcium-dependent cell-adhesion protein. May be involved in the establishment and maintenance of specific neuronal connections in the brain. This is Protocadherin gamma-A6 (PCDHGA6) from Pan troglodytes (Chimpanzee).